Reading from the N-terminus, the 211-residue chain is Large ribosomal subunit protein bL25 (211 aa).

Residues 186-211 are disordered; the sequence is GRALQSMDAAESAVEQPGEQPATAAG.

The protein belongs to the bacterial ribosomal protein bL25 family. CTC subfamily. As to quaternary structure, part of the 50S ribosomal subunit; part of the 5S rRNA/L5/L18/L25 subcomplex. Contacts the 5S rRNA. Binds to the 5S rRNA independently of L5 and L18.

In terms of biological role, this is one of the proteins that binds to the 5S RNA in the ribosome where it forms part of the central protuberance. This chain is Large ribosomal subunit protein bL25, found in Gloeobacter violaceus (strain ATCC 29082 / PCC 7421).